A 316-amino-acid chain; its full sequence is tRNA dimethylallyltransferase (316 aa).

17 to 24 (GPTASGKT) contributes to the ATP binding site. 19 to 24 (TASGKT) is a substrate binding site. Interaction with substrate tRNA stretches follow at residues 42-45 (DSAL), 166-170 (QRLSR), 247-252 (RCVGYR), and 280-287 (KRQITWLR).

The protein belongs to the IPP transferase family. As to quaternary structure, monomer. The cofactor is Mg(2+).

It carries out the reaction adenosine(37) in tRNA + dimethylallyl diphosphate = N(6)-dimethylallyladenosine(37) in tRNA + diphosphate. Catalyzes the transfer of a dimethylallyl group onto the adenine at position 37 in tRNAs that read codons beginning with uridine, leading to the formation of N6-(dimethylallyl)adenosine (i(6)A). The protein is tRNA dimethylallyltransferase of Shigella dysenteriae serotype 1 (strain Sd197).